Reading from the N-terminus, the 624-residue chain is Chaperone protein HtpG (624 aa).

The interval 1-336 (MKGQETRGFQ…SNDLPLNVSR (336 aa)) is a; substrate-binding. Residues 337 to 552 (EILQDSTVTR…ADEMSTQMAK (216 aa)) form a b region. The tract at residues 553–624 (LFAAAGQSVP…IRRMNQLLVS (72 aa)) is c.

Belongs to the heat shock protein 90 family. In terms of assembly, homodimer.

It is found in the cytoplasm. Molecular chaperone. Has ATPase activity. This Salmonella typhi protein is Chaperone protein HtpG.